A 559-amino-acid chain; its full sequence is 2-isopropylmalate synthase (559 aa).

The 275-residue stretch at 33 to 307 (PIWCSSDLRD…NPDLDFSDID (275 aa)) folds into the Pyruvate carboxyltransferase domain. 4 residues coordinate Mg(2+): Asp-42, His-246, His-248, and Asn-282. The segment at 439–559 (ANTPYALVSH…SLSQPEAKAA (121 aa)) is regulatory domain.

The protein belongs to the alpha-IPM synthase/homocitrate synthase family. LeuA type 2 subfamily. In terms of assembly, homodimer. Mg(2+) serves as cofactor.

The protein resides in the cytoplasm. It carries out the reaction 3-methyl-2-oxobutanoate + acetyl-CoA + H2O = (2S)-2-isopropylmalate + CoA + H(+). Its pathway is amino-acid biosynthesis; L-leucine biosynthesis; L-leucine from 3-methyl-2-oxobutanoate: step 1/4. Its function is as follows. Catalyzes the condensation of the acetyl group of acetyl-CoA with 3-methyl-2-oxobutanoate (2-ketoisovalerate) to form 3-carboxy-3-hydroxy-4-methylpentanoate (2-isopropylmalate). This is 2-isopropylmalate synthase from Pseudomonas fluorescens (strain Pf0-1).